A 224-amino-acid polypeptide reads, in one-letter code: Phosphoribosylformylglycinamidine synthase subunit PurQ (224 aa).

The 222-residue stretch at Phe-3–Ala-224 folds into the Glutamine amidotransferase type-1 domain. Cys-86 functions as the Nucleophile in the catalytic mechanism. Catalysis depends on residues His-195 and Glu-197.

In terms of assembly, part of the FGAM synthase complex composed of 1 PurL, 1 PurQ and 2 PurS subunits.

Its subcellular location is the cytoplasm. The catalysed reaction is N(2)-formyl-N(1)-(5-phospho-beta-D-ribosyl)glycinamide + L-glutamine + ATP + H2O = 2-formamido-N(1)-(5-O-phospho-beta-D-ribosyl)acetamidine + L-glutamate + ADP + phosphate + H(+). It catalyses the reaction L-glutamine + H2O = L-glutamate + NH4(+). It functions in the pathway purine metabolism; IMP biosynthesis via de novo pathway; 5-amino-1-(5-phospho-D-ribosyl)imidazole from N(2)-formyl-N(1)-(5-phospho-D-ribosyl)glycinamide: step 1/2. Its function is as follows. Part of the phosphoribosylformylglycinamidine synthase complex involved in the purines biosynthetic pathway. Catalyzes the ATP-dependent conversion of formylglycinamide ribonucleotide (FGAR) and glutamine to yield formylglycinamidine ribonucleotide (FGAM) and glutamate. The FGAM synthase complex is composed of three subunits. PurQ produces an ammonia molecule by converting glutamine to glutamate. PurL transfers the ammonia molecule to FGAR to form FGAM in an ATP-dependent manner. PurS interacts with PurQ and PurL and is thought to assist in the transfer of the ammonia molecule from PurQ to PurL. The sequence is that of Phosphoribosylformylglycinamidine synthase subunit PurQ from Trichormus variabilis (strain ATCC 29413 / PCC 7937) (Anabaena variabilis).